A 186-amino-acid polypeptide reads, in one-letter code: Pyridoxal 5'-phosphate synthase subunit PdxT (186 aa).

L-glutamine is bound at residue 47–49 (GES). The Nucleophile role is filled by cysteine 79. L-glutamine is bound by residues arginine 106 and 134-135 (IR). Catalysis depends on charge relay system residues histidine 170 and glutamate 172.

This sequence belongs to the glutaminase PdxT/SNO family. In the presence of PdxS, forms a dodecamer of heterodimers. Only shows activity in the heterodimer.

It catalyses the reaction aldehydo-D-ribose 5-phosphate + D-glyceraldehyde 3-phosphate + L-glutamine = pyridoxal 5'-phosphate + L-glutamate + phosphate + 3 H2O + H(+). The catalysed reaction is L-glutamine + H2O = L-glutamate + NH4(+). Its pathway is cofactor biosynthesis; pyridoxal 5'-phosphate biosynthesis. Its function is as follows. Catalyzes the hydrolysis of glutamine to glutamate and ammonia as part of the biosynthesis of pyridoxal 5'-phosphate. The resulting ammonia molecule is channeled to the active site of PdxS. The chain is Pyridoxal 5'-phosphate synthase subunit PdxT from Methanothrix thermoacetophila (strain DSM 6194 / JCM 14653 / NBRC 101360 / PT) (Methanosaeta thermophila).